The following is a 125-amino-acid chain: MTRNKVEICGVDTAKLPVLKNEEMRKLFREMQSGEISAREKLVNGNLRLVLSVIQRFNNRGEYVDDLFQVGCIGLMKSIDNFDLGQNVKFSTYAVPMIIGEIRRYLRDNNPIRVSRSLRDIAYKA.

Belongs to the sigma-70 factor family.

Its function is as follows. Sigma factors are initiation factors that promote the attachment of RNA polymerase to specific initiation sites and are then released. In Bacillus thuringiensis subsp. kurstaki, this protein is Putative RNA polymerase sigma-G factor.